The chain runs to 146 residues: Universal stress protein MT1672 (146 aa).

This sequence belongs to the universal stress protein A family.

The protein is Universal stress protein MT1672 of Mycobacterium tuberculosis (strain CDC 1551 / Oshkosh).